A 477-amino-acid chain; its full sequence is Ribulose bisphosphate carboxylase large chain (477 aa).

A propeptide spanning residues 1–2 is cleaved from the precursor; that stretch reads MS. At P3 the chain carries N-acetylproline. 2 residues coordinate substrate: N123 and T173. K175 (proton acceptor) is an active-site residue. Position 177 (K177) interacts with substrate. Positions 201, 203, and 204 each coordinate Mg(2+). K201 is modified (N6-carboxylysine). H294 functions as the Proton acceptor in the catalytic mechanism. Residues R295, H327, and S379 each contribute to the substrate site.

The protein belongs to the RuBisCO large chain family. Type I subfamily. As to quaternary structure, heterohexadecamer of 8 large chains and 8 small chains; disulfide-linked. The disulfide link is formed within the large subunit homodimers. Requires Mg(2+) as cofactor. The disulfide bond which can form in the large chain dimeric partners within the hexadecamer appears to be associated with oxidative stress and protein turnover.

Its subcellular location is the plastid. The protein resides in the chloroplast. It catalyses the reaction 2 (2R)-3-phosphoglycerate + 2 H(+) = D-ribulose 1,5-bisphosphate + CO2 + H2O. The enzyme catalyses D-ribulose 1,5-bisphosphate + O2 = 2-phosphoglycolate + (2R)-3-phosphoglycerate + 2 H(+). Its function is as follows. RuBisCO catalyzes two reactions: the carboxylation of D-ribulose 1,5-bisphosphate, the primary event in carbon dioxide fixation, as well as the oxidative fragmentation of the pentose substrate in the photorespiration process. Both reactions occur simultaneously and in competition at the same active site. This is Ribulose bisphosphate carboxylase large chain from Lolium perenne (Perennial ryegrass).